The sequence spans 252 residues: Ubiquinone biosynthesis O-methyltransferase (252 aa).

Residues Arg36, Gly60, Asp81, and Leu123 each contribute to the S-adenosyl-L-methionine site.

This sequence belongs to the methyltransferase superfamily. UbiG/COQ3 family.

It catalyses the reaction a 3-demethylubiquinol + S-adenosyl-L-methionine = a ubiquinol + S-adenosyl-L-homocysteine + H(+). It carries out the reaction a 3-(all-trans-polyprenyl)benzene-1,2-diol + S-adenosyl-L-methionine = a 2-methoxy-6-(all-trans-polyprenyl)phenol + S-adenosyl-L-homocysteine + H(+). It functions in the pathway cofactor biosynthesis; ubiquinone biosynthesis. O-methyltransferase that catalyzes the 2 O-methylation steps in the ubiquinone biosynthetic pathway. This chain is Ubiquinone biosynthesis O-methyltransferase, found in Rickettsia prowazekii (strain Madrid E).